The primary structure comprises 516 residues: Coiled-coil domain-containing protein 149 (516 aa).

The segment covering 1-18 (MANQLRERHQSLKKKYGE) has biased composition (basic and acidic residues). The disordered stretch occupies residues 1–29 (MANQLRERHQSLKKKYGELIDGDPSVPPE). Coiled-coil stretches lie at residues 1–195 (MANQ…ALEK) and 259–286 (IQHQ…LEVS). Residues 321–332 (PHHKPLTNEEHG) are compositionally biased toward basic and acidic residues. Disordered stretches follow at residues 321-350 (PHHK…SDNE) and 406-452 (ETSF…SLGD). Positions 414-436 (DSQSTASSQENHDNLQSPFSSPE) are enriched in polar residues.

It belongs to the CCDC149 family.

The protein is Coiled-coil domain-containing protein 149 (ccdc149) of Xenopus laevis (African clawed frog).